The following is a 592-amino-acid chain: Aspartate--tRNA ligase (592 aa).

Glu-171 serves as a coordination point for L-aspartate. The segment at Gln-195–Lys-198 is aspartate. Position 217 (Arg-217) interacts with L-aspartate. Residues Arg-217 to Glu-219 and Gln-226 contribute to the ATP site. Residue His-448 participates in L-aspartate binding. Glu-482 contributes to the ATP binding site. Arg-489 lines the L-aspartate pocket. Gly-534–Arg-537 is an ATP binding site.

Belongs to the class-II aminoacyl-tRNA synthetase family. Type 1 subfamily. Homodimer.

It is found in the cytoplasm. It carries out the reaction tRNA(Asp) + L-aspartate + ATP = L-aspartyl-tRNA(Asp) + AMP + diphosphate. In terms of biological role, catalyzes the attachment of L-aspartate to tRNA(Asp) in a two-step reaction: L-aspartate is first activated by ATP to form Asp-AMP and then transferred to the acceptor end of tRNA(Asp). This Vibrio vulnificus (strain CMCP6) protein is Aspartate--tRNA ligase.